A 322-amino-acid polypeptide reads, in one-letter code: Mycothiol acetyltransferase (322 aa).

2 N-acetyltransferase domains span residues 5 to 150 (SWLR…DPDD) and 160 to 322 (VTIR…PARG). Glutamate 36 contributes to the 1D-myo-inositol 2-(L-cysteinylamino)-2-deoxy-alpha-D-glucopyranoside binding site. Acetyl-CoA-binding positions include 79–81 (LVV) and 87–92 (RRGVGT). 3 residues coordinate 1D-myo-inositol 2-(L-cysteinylamino)-2-deoxy-alpha-D-glucopyranoside: glutamate 187, lysine 226, and glutamate 252. Position 256–258 (256–258 (VGV)) interacts with acetyl-CoA. Tyrosine 290 contacts 1D-myo-inositol 2-(L-cysteinylamino)-2-deoxy-alpha-D-glucopyranoside. Acetyl-CoA is bound at residue 295 to 300 (NARAVR).

Belongs to the acetyltransferase family. MshD subfamily. Monomer.

The enzyme catalyses 1D-myo-inositol 2-(L-cysteinylamino)-2-deoxy-alpha-D-glucopyranoside + acetyl-CoA = mycothiol + CoA + H(+). Its function is as follows. Catalyzes the transfer of acetyl from acetyl-CoA to desacetylmycothiol (Cys-GlcN-Ins) to form mycothiol. The polypeptide is Mycothiol acetyltransferase (Parafrankia sp. (strain EAN1pec)).